Here is a 436-residue protein sequence, read N- to C-terminus: UDP-N-acetylmuramate--L-alanine ligase (436 aa).

110 to 116 (GAHGKTS) contacts ATP.

It belongs to the MurCDEF family.

The protein localises to the cytoplasm. The catalysed reaction is UDP-N-acetyl-alpha-D-muramate + L-alanine + ATP = UDP-N-acetyl-alpha-D-muramoyl-L-alanine + ADP + phosphate + H(+). It functions in the pathway cell wall biogenesis; peptidoglycan biosynthesis. In terms of biological role, cell wall formation. This Lacticaseibacillus paracasei (strain ATCC 334 / BCRC 17002 / CCUG 31169 / CIP 107868 / KCTC 3260 / NRRL B-441) (Lactobacillus paracasei) protein is UDP-N-acetylmuramate--L-alanine ligase.